The primary structure comprises 344 residues: Dihydroorotase (344 aa).

Positions 13 and 15 each coordinate Zn(2+). Substrate-binding positions include 15-17 and N41; that span reads HLR. Positions 98, 135, and 173 each coordinate Zn(2+). The residue at position 98 (K98) is an N6-carboxylysine. H135 lines the substrate pocket. L218 contacts substrate. Position 247 (D247) interacts with Zn(2+). D247 is an active-site residue. Substrate is bound by residues H251 and A263.

It belongs to the metallo-dependent hydrolases superfamily. DHOase family. Class II DHOase subfamily. Homodimer. Zn(2+) serves as cofactor.

The enzyme catalyses (S)-dihydroorotate + H2O = N-carbamoyl-L-aspartate + H(+). It participates in pyrimidine metabolism; UMP biosynthesis via de novo pathway; (S)-dihydroorotate from bicarbonate: step 3/3. Its function is as follows. Catalyzes the reversible cyclization of carbamoyl aspartate to dihydroorotate. The chain is Dihydroorotase from Neisseria meningitidis serogroup B (strain ATCC BAA-335 / MC58).